The chain runs to 222 residues: Probable transaldolase (222 aa).

Lysine 83 acts as the Schiff-base intermediate with substrate in catalysis.

It belongs to the transaldolase family. Type 3B subfamily.

Its subcellular location is the cytoplasm. It catalyses the reaction D-sedoheptulose 7-phosphate + D-glyceraldehyde 3-phosphate = D-erythrose 4-phosphate + beta-D-fructose 6-phosphate. It functions in the pathway carbohydrate degradation; pentose phosphate pathway; D-glyceraldehyde 3-phosphate and beta-D-fructose 6-phosphate from D-ribose 5-phosphate and D-xylulose 5-phosphate (non-oxidative stage): step 2/3. Functionally, transaldolase is important for the balance of metabolites in the pentose-phosphate pathway. In Nitrosopumilus maritimus (strain SCM1), this protein is Probable transaldolase.